A 330-amino-acid chain; its full sequence is Protein LEG1 homolog (330 aa).

A signal peptide spans 1–20 (MAFLPSWVCVLVGSFSASLA). Residues asparagine 24 and asparagine 69 are each glycosylated (N-linked (GlcNAc...) asparagine).

This sequence belongs to the LEG1 family. Detected in saliva and in hypomineralized dental enamel (at protein level).

It is found in the secreted. May be involved in early liver development. The sequence is that of Protein LEG1 homolog from Homo sapiens (Human).